Consider the following 301-residue polypeptide: MKKLLPCTALVMCAGMACAQAEERNDWHFNIGAMYEIENVEGYGEDMDGLAEPSVYFNAANGPWRIALAYYQEGPVDYSAGKRGTWFDRPELEVHYQFLENDDFSFGLTGGFRNYGYHYVDEPGKDTANMQRWKIAPDWDVKLTDDLRFNGWLSMYKFANDLNTTGYADTRVETETGLQYTFNETVALRVNYYLERGFNMDDSRNNGEFSTQEIRAYLPLTLGNHSVTPYTRIGLDRWSNWDWQDDIEREGHDFNRVGLFYGYDFQNGLSVSLEYAFEWQDHDEGDSDKFHYAGVGVNYSF.

An N-terminal signal peptide occupies residues 1–21; that stretch reads MKKLLPCTALVMCAGMACAQA. 16 consecutive transmembrane segments (beta stranded) span residues 27 to 35, 47 to 57, 64 to 72, 89 to 98, 104 to 112, 129 to 136, 149 to 158, 172 to 182, 186 to 195, 201 to 209, 213 to 222, 230 to 238, 240 to 248, 254 to 265, 269 to 279, and 289 to 300; these read WHFNIGAMY, MDGLAEPSVYF, WRIALAYYQ, RPELEVHYQF, FSFGLTGGF, NMQRWKIA, FNGWLSMYKF, VETETGLQYTF, VALRVNYYLE, DDSRNNGEF, EIRAYLPLTL, YTRIGLDRW, NWDWQDDIE, FNRVGLFYGYDF, LSVSLEYAFEW, and KFHYAGVGVNYS.

As to quaternary structure, monomer.

It localises to the cell outer membrane. In terms of biological role, forms channels functionally larger than those of classical porins. Functionally, may act as a regulator of the RCS-phosphorelay signal transduction pathway. The polypeptide is Outer membrane porin G (ompG) (Escherichia coli (strain K12)).